A 129-amino-acid chain; its full sequence is MAKKTRRVVKRKKKIAVDHGVVHIKSSYNNTIITLTDPDGKVITWGSGGTAGFQGTRKGTPYAAQLAADQVAKEAVKLGIKKVDILVKGPGSGREAAIRTFQAAGLEIGTIKDVTPIPFNGCRPKKKRV.

The protein belongs to the universal ribosomal protein uS11 family. As to quaternary structure, part of the 30S ribosomal subunit. Interacts with proteins S7 and S18. Binds to IF-3.

Its function is as follows. Located on the platform of the 30S subunit, it bridges several disparate RNA helices of the 16S rRNA. Forms part of the Shine-Dalgarno cleft in the 70S ribosome. The sequence is that of Small ribosomal subunit protein uS11 from Thermosipho melanesiensis (strain DSM 12029 / CIP 104789 / BI429).